We begin with the raw amino-acid sequence, 91 residues long: MGLARLHAIVEGEVQGVGFRRYVQIHAVRLGLKGYAKNLPDGTVEVVAEGYEESIQQFLNYLWKGPPLALVTKVTHKLESYKGEFTSFDTY.

Residues 5–91 form the Acylphosphatase-like domain; the sequence is RLHAIVEGEV…KGEFTSFDTY (87 aa). Catalysis depends on residues Arg-20 and Asn-38.

Belongs to the acylphosphatase family.

It carries out the reaction an acyl phosphate + H2O = a carboxylate + phosphate + H(+). This Metallosphaera sedula (strain ATCC 51363 / DSM 5348 / JCM 9185 / NBRC 15509 / TH2) protein is Acylphosphatase (acyP).